Consider the following 425-residue polypeptide: MRSQGNMSDRLTIEVDCTSLGSNECPSMASSFSPMESPTPTPTSVYSQGSLASPTWHEGGSYPGQGYERHTGTTPMRSAFRLASMTSNDSMGMSYGQMEAQERMPMTDFLSGYDENVEHFWIPQEAQKAYEHGVPGLPYPQAMPQYSTMGRSSYRQHAAPYLPDSATNPCLSRSIFHQPERVPNSMSMGNVIPWMAPQPDSIAPQTIAPSQVAPVTPPPSYSEFSGSINTFKTHSPTTPVRSCSLGTTSGTDTPMSRLSGGMDYLDDFNQSPVYRDNLARVQRQPSRKVARKQSSKQSLSLENLPSIIKQVQFKCKEPGCKGRFKRQEHLKRHMKSHSKEKPHVCWVPGCERAFSRSDNLNAHYTKTHSKRGGRNRYVATLDENSPDYNPEYRGQLTADGRPVYNSKSQDLMPDARETSEEAWLE.

3 disordered regions span residues 28 to 72, 232 to 257, and 281 to 301; these read MASS…RHTG, KTHS…PMSR, and VQRQ…SLSL. Residues 30-44 show a composition bias toward low complexity; that stretch reads SSFSPMESPTPTPTS. Polar residues predominate over residues 232–256; the sequence is KTHSPTTPVRSCSLGTTSGTDTPMS. The segment covering 285–294 has biased composition (basic residues); sequence PSRKVARKQS. C2H2-type zinc fingers lie at residues 321-345 and 351-376; these read KGRF…PHVC and ERAF…GRNR. Basic residues predominate over residues 365 to 374; sequence TKTHSKRGGR. The tract at residues 365–425 is disordered; that stretch reads TKTHSKRGGR…RETSEEAWLE (61 aa).

It localises to the nucleus. Its function is as follows. BrlA, abaA and wetA are pivotal regulators of conidiophore development and conidium maturation. They act individually and together to regulate their own expression and that of numerous other sporulation-specific genes. Binds promoters of target genes at brlA response elements (BREs) containing the conserved sequence 5'-(C/A)(A/G)AGGG(G/A)-3'. Also coordinates the expression of carbohydrate-active enzymes and of the key effectors of cell wall remodeling during autolysis. The polypeptide is C2H2 type master regulator of conidiophore development brlA (Aspergillus niger (strain ATCC MYA-4892 / CBS 513.88 / FGSC A1513)).